Consider the following 101-residue polypeptide: Large ribosomal subunit protein uL24 (101 aa).

It belongs to the universal ribosomal protein uL24 family. In terms of assembly, part of the 50S ribosomal subunit.

One of two assembly initiator proteins, it binds directly to the 5'-end of the 23S rRNA, where it nucleates assembly of the 50S subunit. In terms of biological role, one of the proteins that surrounds the polypeptide exit tunnel on the outside of the subunit. The sequence is that of Large ribosomal subunit protein uL24 from Borrelia garinii subsp. bavariensis (strain ATCC BAA-2496 / DSM 23469 / PBi) (Borreliella bavariensis).